A 352-amino-acid chain; its full sequence is tRNA-specific 2-thiouridylase MnmA (352 aa).

ATP contacts are provided by residues G7–S14 and L33. The Nucleophile role is filled by C94. C94 and C193 form a disulfide bridge. G119 is a binding site for ATP. The segment at K143 to Q145 is interaction with tRNA. The active-site Cysteine persulfide intermediate is C193. The interaction with tRNA stretch occupies residues R298–Y299.

Belongs to the MnmA/TRMU family.

The protein resides in the cytoplasm. It carries out the reaction S-sulfanyl-L-cysteinyl-[protein] + uridine(34) in tRNA + AH2 + ATP = 2-thiouridine(34) in tRNA + L-cysteinyl-[protein] + A + AMP + diphosphate + H(+). Functionally, catalyzes the 2-thiolation of uridine at the wobble position (U34) of tRNA, leading to the formation of s(2)U34. This Trichormus variabilis (strain ATCC 29413 / PCC 7937) (Anabaena variabilis) protein is tRNA-specific 2-thiouridylase MnmA.